We begin with the raw amino-acid sequence, 245 residues long: 5-oxoprolinase subunit A (245 aa).

Belongs to the LamB/PxpA family. As to quaternary structure, forms a complex composed of PxpA, PxpB and PxpC.

It catalyses the reaction 5-oxo-L-proline + ATP + 2 H2O = L-glutamate + ADP + phosphate + H(+). Functionally, catalyzes the cleavage of 5-oxoproline to form L-glutamate coupled to the hydrolysis of ATP to ADP and inorganic phosphate. In Serratia proteamaculans (strain 568), this protein is 5-oxoprolinase subunit A.